The sequence spans 147 residues: Large ribosomal subunit protein uL13 (147 aa).

This sequence belongs to the universal ribosomal protein uL13 family. Part of the 50S ribosomal subunit.

In terms of biological role, this protein is one of the early assembly proteins of the 50S ribosomal subunit, although it is not seen to bind rRNA by itself. It is important during the early stages of 50S assembly. This chain is Large ribosomal subunit protein uL13, found in Renibacterium salmoninarum (strain ATCC 33209 / DSM 20767 / JCM 11484 / NBRC 15589 / NCIMB 2235).